The sequence spans 580 residues: Cis-3-hydroxy-L-proline dehydratase (580 aa).

The Proton acceptor role is filled by serine 66.

The protein belongs to the AcnX family. As to quaternary structure, monomer. The cofactor is Fe(3+).

The enzyme catalyses cis-3-hydroxy-L-proline = 1-pyrroline-2-carboxylate + H2O. Its activity is regulated as follows. Inhibited by Zn(2+), Cd(2+) and Hg(2+), but not by Co(2+), Ni(2+), Mn(2+), Sr(2+), Mg(2+), or Fe(3+). Inhibited by pyrrole-2-carboxylate and its derivative 2-thiophenecarboxylate, but not by trans-aconitate, fluorocitrate and oxalomalate, which are typical inhibitors of the aconitase enzymes. Functionally, catalyzes the dehydration of cis-3-hydroxy-L-proline (c3LHyp) to Delta(1)-pyrroline-2-carboxylate (Pyr2C). Also has activity with (2S,3S,4R)-3,4-dihydroxyproline as substrate, albeit at about 300-fold lower rate. No activity with L-proline, trans-4-hydroxy-L-proline (t4LHyp), cis-4-hydroxy-L-proline (c4LHyp), trans-3-hydroxy-L-proline (t3LHyp), D-proline, cis-4-hydroxy-D-proline (c4DHyp), trans-4-hydroxy-D-proline (t4DHyp) or L-serine as substrates. No hydro-lyase activity with citrate or cis-acotinate. Does not catalyze 2-epimerization of c3LHyp to trans-3-hydroxy-D-proline (t3DHyp). Involved in a degradation pathway that converts c3LHyp to L-proline, which would allow P.aeruginosa to grow on c3LHyp as a sole carbon source. The sequence is that of Cis-3-hydroxy-L-proline dehydratase from Pseudomonas aeruginosa (strain ATCC 15692 / DSM 22644 / CIP 104116 / JCM 14847 / LMG 12228 / 1C / PRS 101 / PAO1).